The following is a 147-amino-acid chain: MVHWTAEEKAAITSVWQKVNVEHDGHDALGRLLIVYPWTQRYFSNFGNLSNSAAVAGNAKVQAHGKKVLSAVGNAISHIDSVKSSLQQLSKIHATELFVDPENFKRFGGVLVIVLGAKLGTAFTPKVQAAWEKFIAVLVDGLSQGYN.

In terms of domain architecture, Globin spans 3-147 (HWTAEEKAAI…LVDGLSQGYN (145 aa)). The heme b site is built by His-64 and His-93.

Belongs to the globin family. In terms of assembly, heterotetramer of two alpha chains and two beta chains. In terms of tissue distribution, red blood cells.

Involved in oxygen transport from the lung to the various peripheral tissues. The sequence is that of Hemoglobin subunit beta-2 (hbb2) from Xenopus laevis (African clawed frog).